The chain runs to 681 residues: U3 small nucleolar ribonucleoprotein protein MPP10 (681 aa).

Phosphoserine occurs at positions 61, 120, and 139. Residues 105-147 (SLLPESEEQEREEDGSEIEADDKEDLEDLEEEEVSDMGNDDPE) show a composition bias toward acidic residues. Disordered regions lie at residues 105-202 (SLLP…IVDD) and 216-364 (NIEK…EKRQ). A coiled-coil region spans residues 109 to 138 (ESEEQEREEDGSEIEADDKEDLEDLEEEEV). A compositionally biased stretch (basic and acidic residues) spans 148–162 (MGERAENSSKSDLRK). Residues Ser-163, Ser-167, and Ser-171 each carry the phosphoserine modification. The span at 180–190 (LEQQSKVQNKG) shows a compositional bias: polar residues. Composition is skewed to basic and acidic residues over residues 193–202 (KPREKSIVDD) and 216–226 (NIEKEEERKDD). Residues 205–239 (FKLSEMEAYLENIEKEEERKDDNDEEEEDIDFFED) adopt a coiled-coil conformation. Residues 227 to 247 (NDEEEEDIDFFEDIDSDEDEG) show a composition bias toward acidic residues. Residue Ser-242 is modified to Phosphoserine. The segment covering 253-264 (KKLKSGKSSRNL) has biased composition (basic residues). Residues Ser-275 and Ser-289 each carry the phosphoserine modification. Over residues 280–290 (TNVHDDELDSN) the composition is skewed to basic and acidic residues. 2 coiled-coil regions span residues 284–324 (DDEL…NKQH) and 348–382 (NVKK…LEKK). The segment covering 291 to 318 (KEDDEIAEEEAEELSISETDEDDDLQEN) has biased composition (acidic residues). Over residues 319-329 (EDNKQHKESLK) the composition is skewed to basic and acidic residues. Lys-350 is covalently cross-linked (Glycyl lysine isopeptide (Lys-Gly) (interchain with G-Cter in SUMO2)). Residues 351-364 (KNSDEVKSSFEKRQ) show a composition bias toward basic and acidic residues. Residues Lys-382 and Lys-394 each participate in a glycyl lysine isopeptide (Lys-Gly) (interchain with G-Cter in SUMO2) cross-link. A coiled-coil region spans residues 469–490 (LAEIYEQEYIKLNQQKTAEEEN). A Glycyl lysine isopeptide (Lys-Gly) (interchain with G-Cter in SUMO2) cross-link involves residue Lys-555. Residues 558-575 (NKAGDIKTAAEKTATDKK) are compositionally biased toward basic and acidic residues. Residues 558-606 (NKAGDIKTAAEKTATDKKRERRKKKYQKRMKIKEKEKRRKLLEKSSVDQ) are disordered. Residues 574–604 (KKRERRKKKYQKRMKIKEKEKRRKLLEKSSV) are a coiled coil. Positions 576 to 598 (RERRKKKYQKRMKIKEKEKRRKL) are enriched in basic residues. Lys-609 is modified (N6-acetyllysine). Glycyl lysine isopeptide (Lys-Gly) (interchain with G-Cter in SUMO2) cross-links involve residues Lys-632 and Lys-649. Residues 648 to 670 (SKLQDQVKMQINDAKKTEKKKKK) adopt a coiled-coil conformation. The tract at residues 660-681 (DAKKTEKKKKKRQDISVHKLKL) is disordered. Residues 672 to 681 (QDISVHKLKL) show a composition bias toward basic and acidic residues.

This sequence belongs to the MPP10 family. Part of the small subunit (SSU) processome, composed of more than 70 proteins and the RNA chaperone small nucleolar RNA (snoRNA) U3. Component of a heterotrimeric complex containing IMP3, IMP4 and MPHOSPH10. Interacts with IMP3 and IMP4. In terms of processing, phosphorylated in M (mitotic) phase.

It localises to the nucleus. It is found in the nucleolus. The protein localises to the chromosome. Component of the 60-80S U3 small nucleolar ribonucleoprotein (U3 snoRNP). Required for the early cleavages during pre-18S ribosomal RNA processing. Part of the small subunit (SSU) processome, first precursor of the small eukaryotic ribosomal subunit. During the assembly of the SSU processome in the nucleolus, many ribosome biogenesis factors, an RNA chaperone and ribosomal proteins associate with the nascent pre-rRNA and work in concert to generate RNA folding, modifications, rearrangements and cleavage as well as targeted degradation of pre-ribosomal RNA by the RNA exosome. The protein is U3 small nucleolar ribonucleoprotein protein MPP10 of Homo sapiens (Human).